A 622-amino-acid polypeptide reads, in one-letter code: Probable ATP-dependent RNA helicase DDX41 (622 aa).

Basic and acidic residues predominate over residues 1-15 (MEDSEPERKRARADE). 2 disordered regions span residues 1 to 39 (MEDS…YVPL) and 51 to 84 (LQRR…PQSN). Position 4 is a phosphoserine (serine 4). Position 9 is an N6-acetyllysine (lysine 9). Residue lysine 9 forms a Glycyl lysine isopeptide (Lys-Gly) (interchain with G-Cter in ubiquitin) linkage. Phosphoserine is present on residues serine 21 and serine 23. The segment covering 24–33 (EDEDEDDEDY) has biased composition (acidic residues). Tyrosine 33 is modified (phosphotyrosine). Residue lysine 115 forms a Glycyl lysine isopeptide (Lys-Gly) (interchain with G-Cter in ubiquitin) linkage. The Q motif signature appears at 181–209 (KSFKEMKFPAAILRGLKKKGILHPTPIQI). The 185-residue stretch at 212-396 (IPTILSGRDM…KSALVKPVTI (185 aa)) folds into the Helicase ATP-binding domain. 225-232 (AFTGSGKT) is a binding site for ATP. Residues 344-347 (DEAD) carry the DEAD box motif. A Helicase C-terminal domain is found at 407 to 567 (DVIQEVEYVK…KVPPVLQVLH (161 aa)). Position 414 is a phosphotyrosine (tyrosine 414). Glycyl lysine isopeptide (Lys-Gly) (interchain with G-Cter in SUMO2) cross-links involve residues lysine 416 and lysine 442. The segment at 580–597 (RGCAFCGGLGHRITDCPK) adopts a CCHC-type zinc-finger fold.

It belongs to the DEAD box helicase family. DDX41 subfamily. In terms of assembly, identified in the spliceosome C complex. Interacts with ERCC6. Interacts with FAM50A. Interacts with STING1. Interacts with CGAS. Interacts with several spliceosomes components such as PRP19 or CDC5L. Post-translationally, acetylation at Lys-9 regulates the nuclear/cytoplasmic localization. Phosphorylated by BTK; phosphorylation induces binding to dsDNA and STING1. In terms of processing, 'Lys-48'-linked ubiquitinated and degraded by TRIM21 leading to negative regulation of the innate immune response to intracellular dsDNA.

Its subcellular location is the nucleus. The protein localises to the cytoplasm. It carries out the reaction ATP + H2O = ADP + phosphate + H(+). Its function is as follows. Multifunctional protein that participates in many aspects of cellular RNA metabolism. Plays pivotal roles in innate immune sensing and hematopoietic homeostasis. Recognizes foreign or self-nucleic acids generated during microbial infection, thereby initiating anti-pathogen responses. Mechanistically, phosphorylation by BTK allows binding to dsDNA leading to interaction with STING1. Modulates the homeostasis of dsDNA through its ATP-dependent DNA-unwinding activity and ATP-independent strand-annealing activity. In turn, induces STING1-mediated type I interferon and cytokine responses to DNA and DNA viruses. During murine leukemia virus infection, primarily senses the DNA/RNA hybrid generated at the first step of reverse transcription, while cGAS recognizes dsDNA generated at the next step and both are needed for the antiretroviral innate immune response. Selectively modulates the transcription of certain immunity-associated genes by regulating their alternative splicing. Binds to RNA (R)-loops, structures consisting of DNA/RNA hybrids and a displaced strand of DNA that occur during transcription, and prevents their accumulation, thereby maintaining genome stability. Also participates in pre-mRNA splicing, translational regulation and snoRNA processing, which is essential for ribosome biogenesis. This chain is Probable ATP-dependent RNA helicase DDX41 (Ddx41), found in Mus musculus (Mouse).